We begin with the raw amino-acid sequence, 229 residues long: MAQFTLWSHAHGPNPWKVVQALKELDLTYETRYVNFSKNEQKSPEHLALNPNGRVPTLIDHHNNDYTIWESDAILIYLADKYDTERKISLPRDHPEYYKVIQYLFFQASGQGIIWGQAGWFSVYHQELVISAITRYRNEIKRVLGVLEDILKDRDYLVANRFTIADLSFISWNNFLEIIFAEGKFSIEEEVPQLDFEKEFPRTYSWHQRLLARPASKATFEERSKALDN.

The 85-residue stretch at 2-86 folds into the GST N-terminal domain; sequence AQFTLWSHAH…YLADKYDTER (85 aa). The GST C-terminal domain occupies 93–229; sequence DHPEYYKVIQ…FEERSKALDN (137 aa).

Belongs to the GST superfamily.

The catalysed reaction is RX + glutathione = an S-substituted glutathione + a halide anion + H(+). Functionally, involved in the oxidative stress response and detoxification. The polypeptide is Glutathione S-transferase 1 (gst1) (Schizosaccharomyces pombe (strain 972 / ATCC 24843) (Fission yeast)).